Here is a 449-residue protein sequence, read N- to C-terminus: MNHHLPSRPARSRQSQGLKGNLRVPGDKSISHRALMFGGLASGETRISGLLEGEDVLRTAEAMRAMGAQIDRRDGTWTIRGVGNGCLLEPEAPLDFGNAGTGSRLTMGLVGTYDMTTRFTGDASLSKRPMGRVLNPLREMGTQVLQAEPGDRLPITLRGPKHATPINYRVPMASAQVKSAVLLAGLNTPGVTTVIEPVMTRDHTEKMLSGFGAAIQIETDKEGARHISIQGQGTLKGQVIAVPGDPSSAAFPLVAALIVPGSDILIENVLMNPTRTGLILTLQEMGADIELLNRRSAGGEDVADLRVRSSALKGVTVPASRAPSMIDEYPILAVAASLAEGETVMLGLEELRVKESDRLSAVAEGLKVNGIDCTEGKDTLTVRGRPEGKGLGGATVTTHLDHRIAMAFLVLGLASERPVSVDDQSMIATSFPEFMDLMTGLGAEIEDRD.

Residues 1–26 (MNHHLPSRPARSRQSQGLKGNLRVPG) are disordered. Lys-28, Ser-29, and Arg-33 together coordinate 3-phosphoshikimate. Lys-28 is a phosphoenolpyruvate binding site. Phosphoenolpyruvate-binding residues include Gly-100 and Arg-128. Residues Ser-174, Gln-176, Asp-327, and Lys-354 each coordinate 3-phosphoshikimate. A phosphoenolpyruvate-binding site is contributed by Gln-176. Residue Asp-327 is the Proton acceptor of the active site. Arg-358 and Arg-403 together coordinate phosphoenolpyruvate.

Belongs to the EPSP synthase family. As to quaternary structure, monomer.

It is found in the cytoplasm. The catalysed reaction is 3-phosphoshikimate + phosphoenolpyruvate = 5-O-(1-carboxyvinyl)-3-phosphoshikimate + phosphate. It functions in the pathway metabolic intermediate biosynthesis; chorismate biosynthesis; chorismate from D-erythrose 4-phosphate and phosphoenolpyruvate: step 6/7. Catalyzes the transfer of the enolpyruvyl moiety of phosphoenolpyruvate (PEP) to the 5-hydroxyl of shikimate-3-phosphate (S3P) to produce enolpyruvyl shikimate-3-phosphate and inorganic phosphate. This Chelativorans sp. (strain BNC1) protein is 3-phosphoshikimate 1-carboxyvinyltransferase.